Here is a 352-residue protein sequence, read N- to C-terminus: tRNA pseudouridine synthase D (352 aa).

The active-site Nucleophile is the D81. The TRUD domain maps to 157 to 303 (GVPNYFGTQR…MDHERRILRL (147 aa)).

This sequence belongs to the pseudouridine synthase TruD family.

It catalyses the reaction uridine(13) in tRNA = pseudouridine(13) in tRNA. Responsible for synthesis of pseudouridine from uracil-13 in transfer RNAs. This is tRNA pseudouridine synthase D from Pseudomonas putida (strain GB-1).